Consider the following 520-residue polypeptide: 2-isopropylmalate synthase (520 aa).

The 263-residue stretch at Ile-12–Val-274 folds into the Pyruvate carboxyltransferase domain. 4 residues coordinate Mn(2+): Asp-21, His-209, His-211, and Asn-245. Residues Arg-396–Ala-520 form a regulatory domain region.

It belongs to the alpha-IPM synthase/homocitrate synthase family. LeuA type 1 subfamily. Homodimer. It depends on Mn(2+) as a cofactor.

The protein resides in the cytoplasm. The enzyme catalyses 3-methyl-2-oxobutanoate + acetyl-CoA + H2O = (2S)-2-isopropylmalate + CoA + H(+). Its pathway is amino-acid biosynthesis; L-leucine biosynthesis; L-leucine from 3-methyl-2-oxobutanoate: step 1/4. Its function is as follows. Catalyzes the condensation of the acetyl group of acetyl-CoA with 3-methyl-2-oxobutanoate (2-ketoisovalerate) to form 3-carboxy-3-hydroxy-4-methylpentanoate (2-isopropylmalate). The chain is 2-isopropylmalate synthase from Xanthomonas campestris pv. campestris (strain B100).